A 1054-amino-acid polypeptide reads, in one-letter code: Topoisomerase 1-associated factor 1 (1054 aa).

4 disordered regions span residues 522–543 (KADDTGNVEDLESLPGEEHESA), 823–846 (RDDKERRGAGGDKEGSQDAEEDDE), 865–953 (EMFA…TINL), and 968–1054 (VSDG…DDDE). Over residues 823–838 (RDDKERRGAGGDKEGS) the composition is skewed to basic and acidic residues. Positions 877 to 887 (KTKQKLKRKGT) are enriched in basic residues. 3 stretches are compositionally biased toward basic and acidic residues: residues 890–901 (STREREKQRDYT), 928–953 (ERDRKFFEKENELREELRKAEPTINL), and 979–1017 (TESHKQYREKVDEDRDDLSHMAERENRQYDFGDEGHDSD).

The protein belongs to the timeless family. As to quaternary structure, component of the fork protection complex (FPC) consisting of TOF1 and CSM3.

It localises to the nucleus. Forms a fork protection complex (FPC) with CSM3 and which is required for chromosome segregation during meiosis and DNA damage repair. FPC coordinates leading and lagging strand synthesis and moves with the replication fork. FPC stabilizes replication forks in a configuration that is recognized by replication checkpoint sensors. In Yarrowia lipolytica (strain CLIB 122 / E 150) (Yeast), this protein is Topoisomerase 1-associated factor 1 (TOF1).